Reading from the N-terminus, the 590-residue chain is Probable metalloendopeptidase G1-type (590 aa).

Histidine 41 serves as a coordination point for Zn(2+). The active site involves glutamate 44. Histidine 45 serves as a coordination point for Zn(2+).

It belongs to the peptidase M44 family. Zn(2+) serves as cofactor.

Seems to be involved in viral proteins maturation by cleavage at Ala-Gly-|-Xaa motifs. In Homo sapiens (Human), this protein is Probable metalloendopeptidase G1-type.